We begin with the raw amino-acid sequence, 38 residues long: Photosystem II reaction center protein L (38 aa).

A helical transmembrane segment spans residues 17–37 (SLYWGLLLIFVLAVLFSNYFF).

Belongs to the PsbL family. PSII is composed of 1 copy each of membrane proteins PsbA, PsbB, PsbC, PsbD, PsbE, PsbF, PsbH, PsbI, PsbJ, PsbK, PsbL, PsbM, PsbT, PsbX, PsbY, PsbZ, Psb30/Ycf12, at least 3 peripheral proteins of the oxygen-evolving complex and a large number of cofactors. It forms dimeric complexes.

It is found in the plastid. The protein localises to the chloroplast thylakoid membrane. In terms of biological role, one of the components of the core complex of photosystem II (PSII). PSII is a light-driven water:plastoquinone oxidoreductase that uses light energy to abstract electrons from H(2)O, generating O(2) and a proton gradient subsequently used for ATP formation. It consists of a core antenna complex that captures photons, and an electron transfer chain that converts photonic excitation into a charge separation. This subunit is found at the monomer-monomer interface and is required for correct PSII assembly and/or dimerization. The chain is Photosystem II reaction center protein L from Angiopteris evecta (Mule's foot fern).